The sequence spans 160 residues: Cytochrome b6-f complex subunit 4 (160 aa).

The next 3 helical transmembrane spans lie at 36 to 56 (LLYI…GLAV), 95 to 115 (LLGV…PFLE), and 131 to 151 (TVFL…TLPI).

This sequence belongs to the cytochrome b family. PetD subfamily. As to quaternary structure, the 4 large subunits of the cytochrome b6-f complex are cytochrome b6, subunit IV (17 kDa polypeptide, petD), cytochrome f and the Rieske protein, while the 4 small subunits are petG, petL, petM and petN. The complex functions as a dimer.

The protein localises to the plastid. It is found in the chloroplast thylakoid membrane. Component of the cytochrome b6-f complex, which mediates electron transfer between photosystem II (PSII) and photosystem I (PSI), cyclic electron flow around PSI, and state transitions. This chain is Cytochrome b6-f complex subunit 4, found in Oryza nivara (Indian wild rice).